The following is a 247-amino-acid chain: MSSRRGRRPALLVFADSLAYYGPTGGLPADDPRIWPNIVASQLDWDLELIGRIGWTCRDVWWAATQDPRAWAALPRAGAVIFATGGMDSLPSVLPTALRELIRYVRPSWLRRWVRDGYAWVQPRLSPVARAALPPHLTAEYLEKTRGAIDFNRPGIPIIASLPSVHIAETYGKAHHGRAGTVAAITEWAQHHDIPLVDLKAAVAEQILSGYGNRDGIHWNFEAHQAVAELMLKALAEAGVPNEKSRG.

This sequence belongs to the OctT acyltransferase family. In terms of assembly, homotetramer.

It carries out the reaction (2R)-2-O-[alpha-D-glucopyranosyl-(1-&gt;6)-alpha-D-glucopyranosyl]-glycerate + octanoyl-CoA = (2R)-2-O-[6-O-octanoyl-alpha-D-glucopyranosyl-(1-&gt;6)-alpha-D-glucopyranosyl]-glycerate + CoA. Sugar octanoyltransferase likely involved in the biosynthesis of mycobacterial methylglucose lipopolysaccharide (MGLP). Catalyzes the transfer of an octanoyl group from octanoyl-CoA to the C6 OH of the second glucose in diglucosylglycerate (DGG). DGG is the preferred acceptor, but to a lesser extent, GG (glucosylglycerate) can also be used as substrate. DGG and GG are the two earliest intermediates in MGLP biosynthesis. The sequence is that of Diglucosylglycerate octanoyltransferase from Mycobacterium tuberculosis (strain ATCC 25618 / H37Rv).